The sequence spans 220 residues: Elongation factor Ts, chloroplastic (220 aa).

It belongs to the EF-Ts family.

It is found in the plastid. It localises to the chloroplast. Associates with the EF-Tu.GDP complex and induces the exchange of GDP to GTP. It remains bound to the aminoacyl-tRNA.EF-Tu.GTP complex up to the GTP hydrolysis stage on the ribosome. The polypeptide is Elongation factor Ts, chloroplastic (tsf) (Porphyra purpurea (Red seaweed)).